The chain runs to 69 residues: DNA-directed RNA polymerase subunit epsilon (69 aa).

Belongs to the RNA polymerase subunit epsilon family. As to quaternary structure, RNAP is composed of a core of 2 alpha, a beta and a beta' subunit. The core is associated with a delta subunit, and at least one of epsilon or omega. When a sigma factor is associated with the core the holoenzyme is formed, which can initiate transcription.

It catalyses the reaction RNA(n) + a ribonucleoside 5'-triphosphate = RNA(n+1) + diphosphate. A non-essential component of RNA polymerase (RNAP). This Lysinibacillus sphaericus (strain C3-41) protein is DNA-directed RNA polymerase subunit epsilon.